We begin with the raw amino-acid sequence, 478 residues long: MHKMMVVEKERSIEERLLQLKNQNDDSECRITACVILSTFIAVCGSFSFGVSLGYTSGAEIGIMKDLDLSIAQFSAFASLSTLGAAIGALFSGKMAIILGRRKTMWVSDLLCIIGWFSIAFAKDVMWLNFGRISSGIGLGLISYVVPVYIAEISPKHVRGTFTFTNQLLQNSGLAMVYFSGNFLNWRILALLGALPCFIQVIGLFFVPESPRWLAKVGSDKELENSLLRLRGGNADISREASDIEVMTKMVENDSKSSFCDLFQRKYRYTLVVGIGLMLIQQFSGSSAVLSYASTILRKAGFSVTIGSTLLGLFMIPKAMIGVILVDKWGRRPLLLTSVSGMCITSMLIGVAFTLQKMQLLPELTPVFTFICVTLYIGTYAIGLGGLPWVIMSEIFPMNIKVTAGSIVTLVSWSSSSIVTYAFNFLLEWSTQGTFYVFGAVGGLALLFIWLLVPETKGLSLEEIQASLIREPDRINQS.

A run of 12 helical transmembrane segments spans residues 31 to 51, 71 to 91, 110 to 130, 133 to 153, 162 to 180, 188 to 208, 270 to 290, 306 to 326, 333 to 353, 367 to 387, 407 to 427, and 433 to 453; these read ITAC…SFGV, IAQF…GALF, LLCI…WLNF, ISSG…IAEI, FTFT…VYFS, ILAL…FFVP, TLVV…SAVL, IGST…VILV, PLLL…GVAF, VFTF…LGGL, IVTL…NFLL, and GTFY…WLLV.

The protein belongs to the major facilitator superfamily. Sugar transporter (TC 2.A.1.1) family. In terms of tissue distribution, expressed in leaf vasculature, stem and flowers.

Its subcellular location is the membrane. Functionally, sugar transporter. The polypeptide is Sugar transporter ERD6-like 18 (SFP2) (Arabidopsis thaliana (Mouse-ear cress)).